Here is a 553-residue protein sequence, read N- to C-terminus: MTKYVFVTGGVVSSLGKGIAAASLAAILESRGLKVTLLKLDPYINVDPGTMSPFQHGEVFVTEDGAETDLDLGHYERFISTKMRKANNFTTGQIYESVIRKERRGDYLGKTVQVIPHITNEIQAFIERGAASATCGEPDVAIVEIGGTVGDIESLPFLEAARQMSLRLGRNSACFVHLTLVPFIATAGELKTKPTQHSVQKLREIGISPHVLLCRADRPIPDDESKKISLFSNVPEDAVISVWDVDSIYKIPQMLHDQGLDRLICEELRLDPQPADLRMWAALVEKLQNPKHEVTIGMVGKYVDLTESYKSLIEALRHASIHTSTKVNIEYINSEELETNGTASLAHLDAVLVPGGFGRRGTEGKIAAVRYAREAKVPYLGICLGMQLAVIEFARDVVGLKQANSTEFDPNTPERVVALITEWYDREGKVEKRTEDSDLGGTMRLGSQRCPIKPGTLAEAIYGKDVNERHRHRYEVNNRFVPQLEAGGLVISARTPSEDLPEMMELPSTMHPWFVGVQFHPEFTSTPRDGHPLFKSFVQAALACQQTRAGAKA.

The interval 1-270 is amidoligase domain; sequence MTKYVFVTGG…DRLICEELRL (270 aa). Ser-13 contributes to the CTP binding site. Ser-13 is a UTP binding site. Residues 14-19 and Asp-71 each bind ATP; that span reads SLGKGI. Mg(2+) contacts are provided by Asp-71 and Glu-144. Residues 151-153, 191-196, and Lys-227 each bind CTP; these read DIE and KTKPTQ. UTP-binding positions include 191-196 and Lys-227; that span reads KTKPTQ. Residues 295 to 547 form the Glutamine amidotransferase type-1 domain; that stretch reads TIGMVGKYVD…VQAALACQQT (253 aa). Residue Gly-356 coordinates L-glutamine. Residue Cys-383 is the Nucleophile; for glutamine hydrolysis of the active site. L-glutamine-binding positions include 384-387, Glu-407, and Arg-473; that span reads LGMQ. Residues His-520 and Glu-522 contribute to the active site.

Belongs to the CTP synthase family. Homotetramer.

It catalyses the reaction UTP + L-glutamine + ATP + H2O = CTP + L-glutamate + ADP + phosphate + 2 H(+). The enzyme catalyses L-glutamine + H2O = L-glutamate + NH4(+). The catalysed reaction is UTP + NH4(+) + ATP = CTP + ADP + phosphate + 2 H(+). Its pathway is pyrimidine metabolism; CTP biosynthesis via de novo pathway; CTP from UDP: step 2/2. Its activity is regulated as follows. Allosterically activated by GTP, when glutamine is the substrate; GTP has no effect on the reaction when ammonia is the substrate. The allosteric effector GTP functions by stabilizing the protein conformation that binds the tetrahedral intermediate(s) formed during glutamine hydrolysis. Inhibited by the product CTP, via allosteric rather than competitive inhibition. Functionally, catalyzes the ATP-dependent amination of UTP to CTP with either L-glutamine or ammonia as the source of nitrogen. Regulates intracellular CTP levels through interactions with the four ribonucleotide triphosphates. In Burkholderia mallei (strain NCTC 10229), this protein is CTP synthase.